We begin with the raw amino-acid sequence, 192 residues long: Large ribosomal subunit protein bL25 (192 aa).

It belongs to the bacterial ribosomal protein bL25 family. CTC subfamily. In terms of assembly, part of the 50S ribosomal subunit; part of the 5S rRNA/L5/L18/L25 subcomplex. Contacts the 5S rRNA. Binds to the 5S rRNA independently of L5 and L18.

Functionally, this is one of the proteins that binds to the 5S RNA in the ribosome where it forms part of the central protuberance. The polypeptide is Large ribosomal subunit protein bL25 (Marinomonas sp. (strain MWYL1)).